We begin with the raw amino-acid sequence, 264 residues long: Proteasome assembly chaperone 2 (264 aa).

At T137 the chain carries Phosphothreonine.

It belongs to the PSMG2 family. In terms of assembly, forms a heterodimer with PSMG1. The PSMG1-PSMG2 heterodimer interacts directly with the PSMA5 and PSMA7 proteasome alpha subunits. In terms of processing, degraded by the proteasome upon completion of 20S proteasome maturation. As to expression, widely expressed with highest levels in lung, brain and colon. Moderately expressed in muscle, stomach, spleen and heart. Weakly expressed in small intestine, pancreas and liver. Highly expressed in hepatocellular carcinomas with low levels in surrounding liver tissue.

The protein resides in the nucleus. In terms of biological role, chaperone protein which promotes assembly of the 20S proteasome as part of a heterodimer with PSMG1. The PSMG1-PSMG2 heterodimer binds to the PSMA5 and PSMA7 proteasome subunits, promotes assembly of the proteasome alpha subunits into the heteroheptameric alpha ring and prevents alpha ring dimerization. This chain is Proteasome assembly chaperone 2, found in Homo sapiens (Human).